A 943-amino-acid polypeptide reads, in one-letter code: Protein translocase subunit SecA (943 aa).

ATP-binding positions include glutamine 90, 108 to 112 (GEGKT), and aspartate 509. A disordered region spans residues 535 to 560 (PNNEHKPPIPKQRSSKSKGGFSSKVG). A compositionally biased stretch (low complexity) spans 551–560 (SKGGFSSKVG).

The protein belongs to the SecA family. In terms of assembly, monomer and homodimer. Part of the essential Sec protein translocation apparatus which comprises SecA, SecYEG and auxiliary proteins SecDF. Other proteins may also be involved.

The protein resides in the cell inner membrane. Its subcellular location is the cellular thylakoid membrane. It is found in the cytoplasm. The catalysed reaction is ATP + H2O + cellular proteinSide 1 = ADP + phosphate + cellular proteinSide 2.. Part of the Sec protein translocase complex. Interacts with the SecYEG preprotein conducting channel. Has a central role in coupling the hydrolysis of ATP to the transfer of proteins into and across the cell membrane, serving as an ATP-driven molecular motor driving the stepwise translocation of polypeptide chains across the membrane. Functionally, probably participates in protein translocation into and across both the cytoplasmic and thylakoid membranes in cyanobacterial cells. This chain is Protein translocase subunit SecA, found in Prochlorococcus marinus (strain MIT 9312).